Consider the following 107-residue polypeptide: Phosphoribosyl-ATP pyrophosphatase (107 aa).

Belongs to the PRA-PH family.

It is found in the cytoplasm. It catalyses the reaction 1-(5-phospho-beta-D-ribosyl)-ATP + H2O = 1-(5-phospho-beta-D-ribosyl)-5'-AMP + diphosphate + H(+). It participates in amino-acid biosynthesis; L-histidine biosynthesis; L-histidine from 5-phospho-alpha-D-ribose 1-diphosphate: step 2/9. The polypeptide is Phosphoribosyl-ATP pyrophosphatase (hisE) (Clostridium tetani (strain Massachusetts / E88)).